We begin with the raw amino-acid sequence, 405 residues long: Coenzyme F420 hydrogenase subunit alpha (405 aa).

Ni(2+) is bound by residues C63, C66, C380, and C383.

It belongs to the [NiFe]/[NiFeSe] hydrogenase large subunit family. In terms of assembly, heterocomplex of the form (alpha(1)beta(1)gamma(1))(8). It depends on Ni(2+) as a cofactor. Iron-sulfur cluster serves as cofactor. Requires FAD as cofactor.

It catalyses the reaction oxidized coenzyme F420-(gamma-L-Glu)(n) + H2 + H(+) = reduced coenzyme F420-(gamma-L-Glu)(n). Functionally, reduces the physiological low-potential two-electron acceptor coenzyme F420, and the artificial one-electron acceptor methylviologen. This chain is Coenzyme F420 hydrogenase subunit alpha (frhA), found in Methanothermobacter thermautotrophicus (strain ATCC 29096 / DSM 1053 / JCM 10044 / NBRC 100330 / Delta H) (Methanobacterium thermoautotrophicum).